Reading from the N-terminus, the 997-residue chain is Sorting nexin-19 (997 aa).

In terms of domain architecture, PXA spans E95–R273. Disordered stretches follow at residues S313–I333 and G413–T437. Positions G422–P435 are enriched in acidic residues. Residues L538–R668 form the PX domain. 2 residues coordinate a 1,2-diacyl-sn-glycero-3-phospho-(1D-myo-inositol-3-phosphate): R587 and R634. The disordered stretch occupies residues F697–S728. The span at N714–K724 shows a compositional bias: basic and acidic residues.

Belongs to the sorting nexin family. As to quaternary structure, interacts with PTPRN.

It localises to the early endosome membrane. The protein localises to the cytoplasmic vesicle membrane. In terms of biological role, plays a role in intracellular vesicle trafficking and exocytosis. May play a role in maintaining insulin-containing dense core vesicles in pancreatic beta-cells and in preventing their degradation. May play a role in insulin secretion. Interacts with membranes containing phosphatidylinositol 3-phosphate (PtdIns(3P)). The protein is Sorting nexin-19 of Mus musculus (Mouse).